A 777-amino-acid polypeptide reads, in one-letter code: Acyl-CoA dehydrogenase family member 11 (777 aa).

FAD-binding positions include 501 to 511, 509 to 511, 535 to 537, and S537; these read FCMTEPDVASS, ASS, and WSS. A substrate-binding site is contributed by S511. 626–629 provides a ligand contact to substrate; it reads GPGR. FAD-binding positions include R654, Q724, and 724-728; that span reads QVCGG. Residue G752 coordinates substrate. FAD-binding positions include 753-755 and E755; that span reads PDE.

Belongs to the acyl-CoA dehydrogenase family. In terms of assembly, homodimer. Requires FAD as cofactor.

The protein resides in the peroxisome. It is found in the mitochondrion membrane. The catalysed reaction is a 2,3-saturated acyl-CoA + oxidized [electron-transfer flavoprotein] + H(+) = a (2E)-enoyl-CoA + reduced [electron-transfer flavoprotein]. It carries out the reaction docosanoyl-CoA + oxidized [electron-transfer flavoprotein] + H(+) = (2E)-docosenoyl-CoA + reduced [electron-transfer flavoprotein]. The enzyme catalyses tetracosanoyl-CoA + oxidized [electron-transfer flavoprotein] + H(+) = (2E)-tetracosenoyl-CoA + reduced [electron-transfer flavoprotein]. It catalyses the reaction eicosanoyl-CoA + oxidized [electron-transfer flavoprotein] + H(+) = (2E)-eicosenoyl-CoA + reduced [electron-transfer flavoprotein]. The catalysed reaction is hexacosanoyl-CoA + oxidized [electron-transfer flavoprotein] + H(+) = (2E)-hexacosenoyl-CoA + reduced [electron-transfer flavoprotein]. It carries out the reaction tricosanoyl-CoA + oxidized [electron-transfer flavoprotein] + H(+) = (2E)-tricosenoyl-CoA + reduced [electron-transfer flavoprotein]. It functions in the pathway lipid metabolism; fatty acid beta-oxidation. Its function is as follows. Acyl-CoA dehydrogenase, that exhibits maximal activity towards saturated C22-CoA. Probably participates in beta-oxydation and energy production but could also play a role in the metabolism of specific fatty acids to control fatty acids composition of cellular lipids in brain. The sequence is that of Acyl-CoA dehydrogenase family member 11 (ACAD11) from Gallus gallus (Chicken).